Here is a 451-residue protein sequence, read N- to C-terminus: Uronate isomerase (451 aa).

It belongs to the metallo-dependent hydrolases superfamily. Uronate isomerase family.

It catalyses the reaction D-glucuronate = D-fructuronate. It carries out the reaction aldehydo-D-galacturonate = keto-D-tagaturonate. Its pathway is carbohydrate metabolism; pentose and glucuronate interconversion. The protein is Uronate isomerase of Thermotoga sp. (strain RQ2).